Here is a 259-residue protein sequence, read N- to C-terminus: Peroxiredoxin-4 (259 aa).

In terms of domain architecture, Thioredoxin spans 66 to 224; it reads IRIRKPAPAF…AIRTLKALKF (159 aa). The Cysteine sulfenic acid (-SOH) intermediate role is filled by C111.

The protein belongs to the peroxiredoxin family. AhpC/Prx1 subfamily. Homodimer; disulfide-linked, upon oxidation. 5 homodimers assemble to form a ring-like decamer.

Its subcellular location is the cytoplasm. It is found in the endoplasmic reticulum. The enzyme catalyses a hydroperoxide + [thioredoxin]-dithiol = an alcohol + [thioredoxin]-disulfide + H2O. Its function is as follows. Thiol-specific peroxidase that catalyzes the reduction of hydrogen peroxide and organic hydroperoxides to water and alcohols, respectively. Plays a role in cell protection against oxidative stress by detoxifying peroxides and as sensor of hydrogen peroxide-mediated signaling events. Regulates the activation of NF-kappa-B in the cytosol by a modulation of I-kappa-B-alpha phosphorylation. This is Peroxiredoxin-4 (prdx4) from Dictyostelium discoideum (Social amoeba).